Reading from the N-terminus, the 247-residue chain is 2,3-bisphosphoglycerate-dependent phosphoglycerate mutase (247 aa).

Substrate-binding positions include 8 to 15, 21 to 22, Arg-60, 87 to 90, Lys-98, 114 to 115, and 183 to 184; these read RHGESQWN, TG, ERHY, RR, and GN. His-9 (tele-phosphohistidine intermediate) is an active-site residue. Glu-87 functions as the Proton donor/acceptor in the catalytic mechanism.

This sequence belongs to the phosphoglycerate mutase family. BPG-dependent PGAM subfamily.

It catalyses the reaction (2R)-2-phosphoglycerate = (2R)-3-phosphoglycerate. It participates in carbohydrate degradation; glycolysis; pyruvate from D-glyceraldehyde 3-phosphate: step 3/5. Functionally, catalyzes the interconversion of 2-phosphoglycerate and 3-phosphoglycerate. The chain is 2,3-bisphosphoglycerate-dependent phosphoglycerate mutase from Chlorobium limicola (strain DSM 245 / NBRC 103803 / 6330).